A 102-amino-acid chain; its full sequence is Protein translation factor SUI1 homolog (102 aa).

Belongs to the SUI1 family.

The protein is Protein translation factor SUI1 homolog of Methanosarcina mazei (strain ATCC BAA-159 / DSM 3647 / Goe1 / Go1 / JCM 11833 / OCM 88) (Methanosarcina frisia).